The sequence spans 87 residues: Putative regulatory protein BH2513 (87 aa).

It belongs to the RemA family.

The protein is Putative regulatory protein BH2513 of Halalkalibacterium halodurans (strain ATCC BAA-125 / DSM 18197 / FERM 7344 / JCM 9153 / C-125) (Bacillus halodurans).